The chain runs to 359 residues: NAC transcription factor 47 (359 aa).

Positions 10-186 (LPPGFRFHPT…DWVLCRIYKK (177 aa)) constitute an NAC domain. The DNA-binding element occupies 112–192 (IGIKKALVFY…IYKKSHASLS (81 aa)). Disordered stretches follow at residues 147 to 166 (KRIN…FGDR) and 200 to 226 (TSNQ…LQND). The span at 148–165 (RINSSRSGGSEVNNNFGD) shows a compositional bias: polar residues.

Its subcellular location is the nucleus. Transcription factor that binds to the promoter of ACO5, an ACC oxidase involved in ethylene biosynthesis. Mediates waterlogging-induced hyponastic leaf movement, and cell expansion in abaxial cells of the basal petiole region, by directly regulating the expression of ACO5. Required for normal seed development and morphology. This is NAC transcription factor 47 from Arabidopsis thaliana (Mouse-ear cress).